The primary structure comprises 521 residues: Anaerobic nitric oxide reductase flavorubredoxin (521 aa).

Positions 30 to 210 (HKGTSYNSYL…PFSPLVTAKI (181 aa)) are zinc metallo-hydrolase. Fe cation contacts are provided by histidine 79, glutamate 81, aspartate 83, histidine 147, aspartate 166, and histidine 227. The 140-residue stretch at 254–393 (ITLFYDSMSN…LCREHGRQLA (140 aa)) folds into the Flavodoxin-like domain. Residues 260–264 (SMSNN) and 342–369 (AFGSYGWTGGAVDRIQTRLMDAGFDISI) contribute to the FMN site. Residues 464 to 515 (DQPMLCTVCQWIYDPALGEPDQLVAPGTPWARVPDSFLCPGCGIGKEVFEPC) enclose the Rubredoxin-like domain. Cysteine 469, cysteine 472, cysteine 502, and cysteine 505 together coordinate Fe cation.

The protein in the N-terminal section; belongs to the zinc metallo-hydrolase group 3 family. In terms of assembly, homotetramer. Fe cation is required as a cofactor. The cofactor is FMN.

It localises to the cytoplasm. It functions in the pathway nitrogen metabolism; nitric oxide reduction. Anaerobic nitric oxide reductase; uses NADH to detoxify nitric oxide (NO), protecting several 4Fe-4S NO-sensitive enzymes. Has at least 2 reductase partners, only one of which (NorW, flavorubredoxin reductase) has been identified. NO probably binds to the di-iron center; electrons enter from the NorW at rubredoxin and are transferred sequentially to the FMN center and the di-iron center. Also able to function as an aerobic oxygen reductase. The protein is Anaerobic nitric oxide reductase flavorubredoxin of Aeromonas salmonicida (strain A449).